A 224-amino-acid polypeptide reads, in one-letter code: UPF0758 protein VCM66_0205 (224 aa).

Residues 1 to 20 are disordered; it reads MSLKQLPTESMPREKLLQRG. The 123-residue stretch at 102 to 224 folds into the MPN domain; the sequence is ALTSPQQTKL…VVSFAERGWI (123 aa). 3 residues coordinate Zn(2+): histidine 173, histidine 175, and aspartate 186. The JAMM motif signature appears at 173 to 186; that stretch reads HNHPSGVAEPSQAD.

It belongs to the UPF0758 family.

In Vibrio cholerae serotype O1 (strain M66-2), this protein is UPF0758 protein VCM66_0205.